An 88-amino-acid polypeptide reads, in one-letter code: MNRFIISMIALLAVFCAVSTASPLLYRAPQYQMYDDVQFVKRSNAELINGLIGMDLGKLSAVGKRSNAELINGLLSMNLNKLSGAGRR.

The N-terminal stretch at 1 to 21 is a signal peptide; that stretch reads MNRFIISMIALLAVFCAVSTA.

The protein localises to the secreted. Its function is as follows. Probable ligand of isoforms a and b of the calcitonin receptor-like protein, pdfr-1, a G-protein coupled receptor. May not signal through isoform c of pdfr-1. Involved in locomotion; more specifically mate searching behavior of males, independent of nutritional status. Involved in regulating the male-specific expression of TGFbeta-like daf-7 in the ASJ chemosensory neurons. Plays a role in circadian rhythms of locomotor activity. Involved in mediating arousal from the sleep-like state called lethargus, which occurs during molting between larval and adult stages, in part by regulating touch sensitivity, and working in concert with neuropeptide flp-2. In the presence of food, plays a role in initiating and extending exploratory roaming behavior, in opposition to 5-hydroxytryptamine (serotonin) signaling. In Caenorhabditis elegans, this protein is Pigment dispersing factor homolog pdf-1.